The following is a 455-amino-acid chain: Bifunctional protein GlmU (455 aa).

A pyrophosphorylase region spans residues 1–230 (MSNRFAVILA…VEETLGVNDR (230 aa)). UDP-N-acetyl-alpha-D-glucosamine contacts are provided by residues 9-12 (LAAG), lysine 23, glutamine 73, and 78-79 (GT). Mg(2+) is bound at residue aspartate 103. Residues glycine 140, glutamate 155, asparagine 170, and asparagine 228 each contribute to the UDP-N-acetyl-alpha-D-glucosamine site. Asparagine 228 is a binding site for Mg(2+). Residues 231–251 (VALAQAEQVMKRRINEAWMRK) form a linker region. Residues 252-455 (GVTFIDPEQT…KEHYVTKKNN (204 aa)) form an N-acetyltransferase region. UDP-N-acetyl-alpha-D-glucosamine is bound by residues arginine 333 and lysine 351. Catalysis depends on histidine 363, which acts as the Proton acceptor. Residues tyrosine 366 and asparagine 377 each contribute to the UDP-N-acetyl-alpha-D-glucosamine site. Residues 386 to 387 (NY), alanine 423, and arginine 440 each bind acetyl-CoA.

The protein in the N-terminal section; belongs to the N-acetylglucosamine-1-phosphate uridyltransferase family. In the C-terminal section; belongs to the transferase hexapeptide repeat family. As to quaternary structure, homotrimer. Requires Mg(2+) as cofactor.

It is found in the cytoplasm. It carries out the reaction alpha-D-glucosamine 1-phosphate + acetyl-CoA = N-acetyl-alpha-D-glucosamine 1-phosphate + CoA + H(+). The enzyme catalyses N-acetyl-alpha-D-glucosamine 1-phosphate + UTP + H(+) = UDP-N-acetyl-alpha-D-glucosamine + diphosphate. It functions in the pathway nucleotide-sugar biosynthesis; UDP-N-acetyl-alpha-D-glucosamine biosynthesis; N-acetyl-alpha-D-glucosamine 1-phosphate from alpha-D-glucosamine 6-phosphate (route II): step 2/2. Its pathway is nucleotide-sugar biosynthesis; UDP-N-acetyl-alpha-D-glucosamine biosynthesis; UDP-N-acetyl-alpha-D-glucosamine from N-acetyl-alpha-D-glucosamine 1-phosphate: step 1/1. It participates in bacterial outer membrane biogenesis; LPS lipid A biosynthesis. Catalyzes the last two sequential reactions in the de novo biosynthetic pathway for UDP-N-acetylglucosamine (UDP-GlcNAc). The C-terminal domain catalyzes the transfer of acetyl group from acetyl coenzyme A to glucosamine-1-phosphate (GlcN-1-P) to produce N-acetylglucosamine-1-phosphate (GlcNAc-1-P), which is converted into UDP-GlcNAc by the transfer of uridine 5-monophosphate (from uridine 5-triphosphate), a reaction catalyzed by the N-terminal domain. This chain is Bifunctional protein GlmU, found in Halalkalibacterium halodurans (strain ATCC BAA-125 / DSM 18197 / FERM 7344 / JCM 9153 / C-125) (Bacillus halodurans).